Reading from the N-terminus, the 473-residue chain is MIKEELIVKTTALPQSRIALELEIPSNTCKSCVNETINSISRSAKIPGFRLGKIPKQVLIQRIGITQLHASALEKIIDKSWNQALKMESIEPLSEPELVDGFESILKFFNPEKPLKITLQTDIAPEFKLKKSKGLSVEIKKSKFDPKSIDEALEKSRNQLANIIPVNNRPAKLGDIAVVSFKGVYKDSKKEIDGGSSDSMDLELEKNKMIPGFVEGIVGMKIDDNKTLTLRFPEDYSHEDSRGKEAIFDISLKDLKEKELPELNDDFAKQSGNKDSLKELKKDIEKQLKENFDNTQKNIKVEALMDALSKELDAEIPKAMIDIEVRNNIEQTAQRFAQQGMDIKSTFTPELVKSLAESTRPQAEKNVQRNLALKALSEREKITVDNEEIDQKMKEYEDEISKSPKQIDIQKLKDVVRNDLLQEKLITWLEENSAVKEINEKATKLTTKTTTKATTKKGVKTKSKPKVNKKEKN.

Positions 174 to 261 (GDIAVVSFKG…LKDLKEKELP (88 aa)) constitute a PPIase FKBP-type domain. The tract at residues 442 to 473 (ATKLTTKTTTKATTKKGVKTKSKPKVNKKEKN) is disordered. Over residues 444-453 (KLTTKTTTKA) the composition is skewed to low complexity. Residues 454–467 (TTKKGVKTKSKPKV) are compositionally biased toward basic residues.

Belongs to the FKBP-type PPIase family. Tig subfamily.

The protein resides in the cytoplasm. The catalysed reaction is [protein]-peptidylproline (omega=180) = [protein]-peptidylproline (omega=0). Its function is as follows. Involved in protein export. Acts as a chaperone by maintaining the newly synthesized protein in an open conformation. Functions as a peptidyl-prolyl cis-trans isomerase. This chain is Trigger factor, found in Prochlorococcus marinus subsp. pastoris (strain CCMP1986 / NIES-2087 / MED4).